Reading from the N-terminus, the 252-residue chain is MSLPATFDLTPEDAQLLLAANTHLGARNVQVHQEPYVFNTRPDGVNVINVGKTWEKIVLAARIIAAIPNPEDVCAISSRTYGQRAVLKFSAHTGATPIAGRFTPGSFTNYITRSFKEPRLIIVTDPRSDFQAIKEASYVNIPVIALTDLDSPSEYVDVAIPCNNRGKHSIGLVWYLLAREVLRLRGALVDRTQPWAIMPDLYFYRNPEEVEQQAAEETTSTGADAEESKEEVAEGQNEASEWAEENTEAVSW.

Ser2 carries the N-acetylserine modification. Residues 209-252 (EVEQQAAEETTSTGADAEESKEEVAEGQNEASEWAEENTEAVSW) form a disordered region. Over residues 241–252 (EWAEENTEAVSW) the composition is skewed to acidic residues.

It belongs to the universal ribosomal protein uS2 family. Component of the small ribosomal subunit. Mature ribosomes consist of a small (40S) and a large (60S) subunit. The 40S subunit contains about 33 different proteins and 1 molecule of RNA (18S). The 60S subunit contains about 49 different proteins and 3 molecules of RNA (25S, 5.8S and 5S). Interacts with RPS21.

It is found in the cytoplasm. In terms of biological role, required for the assembly and/or stability of the 40S ribosomal subunit. Required for the processing of the 20S rRNA-precursor to mature 18S rRNA in a late step of the maturation of 40S ribosomal subunits. This chain is Small ribosomal subunit protein uS2A, found in Vanderwaltozyma polyspora (strain ATCC 22028 / DSM 70294 / BCRC 21397 / CBS 2163 / NBRC 10782 / NRRL Y-8283 / UCD 57-17) (Kluyveromyces polysporus).